Consider the following 86-residue polypeptide: Small ribosomal subunit protein bS20 (86 aa).

Over residues Met-1–Arg-18 the composition is skewed to basic and acidic residues. The tract at residues Met-1–Lys-25 is disordered.

It belongs to the bacterial ribosomal protein bS20 family.

Its function is as follows. Binds directly to 16S ribosomal RNA. This Mycobacteroides abscessus (strain ATCC 19977 / DSM 44196 / CCUG 20993 / CIP 104536 / JCM 13569 / NCTC 13031 / TMC 1543 / L948) (Mycobacterium abscessus) protein is Small ribosomal subunit protein bS20.